Reading from the N-terminus, the 426-residue chain is D-tagatose-1,6-bisphosphate aldolase subunit KbaZ (426 aa).

The protein belongs to the GatZ/KbaZ family. KbaZ subfamily. In terms of assembly, forms a complex with KbaY.

The protein operates within carbohydrate metabolism; D-tagatose 6-phosphate degradation; D-glyceraldehyde 3-phosphate and glycerone phosphate from D-tagatose 6-phosphate: step 2/2. Its function is as follows. Component of the tagatose-1,6-bisphosphate aldolase KbaYZ that is required for full activity and stability of the Y subunit. Could have a chaperone-like function for the proper and stable folding of KbaY. When expressed alone, KbaZ does not show any aldolase activity. This chain is D-tagatose-1,6-bisphosphate aldolase subunit KbaZ, found in Escherichia coli O6:H1 (strain CFT073 / ATCC 700928 / UPEC).